Reading from the N-terminus, the 679-residue chain is UvrABC system protein C (679 aa).

The GIY-YIG domain occupies 65–143 (NSPGVYRMLN…IKRLRPRFNV (79 aa)). In terms of domain architecture, UVR spans 253–288 (QKVKSHMAEAMNQAAEDLDFERAAIYRDRLAALSHV).

It belongs to the UvrC family. As to quaternary structure, interacts with UvrB in an incision complex.

It localises to the cytoplasm. Functionally, the UvrABC repair system catalyzes the recognition and processing of DNA lesions. UvrC both incises the 5' and 3' sides of the lesion. The N-terminal half is responsible for the 3' incision and the C-terminal half is responsible for the 5' incision. This Rhizobium etli (strain ATCC 51251 / DSM 11541 / JCM 21823 / NBRC 15573 / CFN 42) protein is UvrABC system protein C.